We begin with the raw amino-acid sequence, 376 residues long: C-type lectin domain family 4 member M (376 aa).

Residues 1–49 (MSDSKEPRVQQLGLLEEDPTTSGIRLFPRDFQFQQIHGHKSSTGCLGHG) lie on the Cytoplasmic side of the membrane. The short motif at 14–15 (LL) is the Endocytosis signal element. Residues 50–70 (ALVLQLLSFTLLAGVLVAILV) form a helical; Signal-anchor for type II membrane protein membrane-spanning segment. At 71-376 (QVSKVPSSLS…KKPTVCFRDE (306 aa)) the chain is on the extracellular side. Asparagine 92 carries N-linked (GlcNAc...) asparagine glycosylation. Tandem repeats lie at residues 108 to 130 (KLQE…PEKS), 131 to 153 (KLQE…PEKS), 154 to 176 (KLQE…PEKS), 177 to 199 (KLQE…PEKS), 200 to 222 (KLQE…PDQS), and 223 to 245 (KQQQ…CRHC). A 6 X approximate tandem repeats region spans residues 108 to 246 (KLQEIYQELT…AFERLCRHCP (139 aa)). Disulfide bonds link cysteine 242–cysteine 372, cysteine 245–cysteine 256, cysteine 273–cysteine 366, and cysteine 345–cysteine 358. A C-type lectin domain is found at 251 to 367 (FFQGNCYFMS…CDVDNYWICK (117 aa)). 6 residues coordinate Ca(2+): glutamate 336, asparagine 338, serine 340, glutamate 343, asparagine 354, and aspartate 355. The N-linked (GlcNAc...) asparagine glycan is linked to asparagine 338.

Homotetramer.

The protein resides in the membrane. Functionally, probable pathogen-recognition receptor involved in peripheral immune surveillance in liver. May mediate the endocytosis of pathogens which are subsequently degraded in lysosomal compartments. Probably recognizes in a calcium-dependent manner high mannose N-linked oligosaccharides in a variety of pathogen antigens. Is a receptor for ICAM3, probably by binding to mannose-like carbohydrates. This is C-type lectin domain family 4 member M (CLEC4M) from Gorilla gorilla gorilla (Western lowland gorilla).